The following is a 235-amino-acid chain: Carboxy-S-adenosyl-L-methionine synthase (235 aa).

S-adenosyl-L-methionine is bound by residues Y35, G60 to S62, D83 to N84, N124, and R191.

This sequence belongs to the class I-like SAM-binding methyltransferase superfamily. Cx-SAM synthase family. In terms of assembly, homodimer.

It carries out the reaction prephenate + S-adenosyl-L-methionine = carboxy-S-adenosyl-L-methionine + 3-phenylpyruvate + H2O. Functionally, catalyzes the conversion of S-adenosyl-L-methionine (SAM) to carboxy-S-adenosyl-L-methionine (Cx-SAM). The protein is Carboxy-S-adenosyl-L-methionine synthase of Campylobacter jejuni subsp. jejuni serotype O:2 (strain ATCC 700819 / NCTC 11168).